The sequence spans 253 residues: Small ribosomal subunit protein eS6 (253 aa).

The tract at residues 200-253 (KKRLAKRKQSENDYAKLLAQRKKESKVRRQEELKRRRSASMRDSKSSDKSAPQK) is disordered. Residues 226-247 (VRRQEELKRRRSASMRDSKSSD) show a composition bias toward basic and acidic residues.

This sequence belongs to the eukaryotic ribosomal protein eS6 family. As to quaternary structure, component of the small ribosomal subunit. Part of the small subunit (SSU) processome, composed of more than 70 proteins and the RNA chaperone small nucleolar RNA (snoRNA) U3. Ribosomal protein S6 is the major substrate of protein kinases in eukaryote ribosomes.

Its subcellular location is the cytoplasm. The protein resides in the nucleus. The protein localises to the nucleolus. Its function is as follows. Component of the 40S small ribosomal subunit. Plays an important role in controlling cell growth and proliferation through the selective translation of particular classes of mRNA. Part of the small subunit (SSU) processome, first precursor of the small eukaryotic ribosomal subunit. During the assembly of the SSU processome in the nucleolus, many ribosome biogenesis factors, an RNA chaperone and ribosomal proteins associate with the nascent pre-rRNA and work in concert to generate RNA folding, modifications, rearrangements and cleavage as well as targeted degradation of pre-ribosomal RNA by the RNA exosome. This chain is Small ribosomal subunit protein eS6 (RpS6), found in Spodoptera frugiperda (Fall armyworm).